A 215-amino-acid polypeptide reads, in one-letter code: Adenylate kinase (215 aa).

Residue 10-15 (GAGKGT) participates in ATP binding. The NMP stretch occupies residues 30-59 (STGDMFRKAIKDETDLGKEAKSYMDRGELV). AMP is bound by residues Thr-31, Arg-36, 57–59 (ELV), 85–88 (GFPR), and Gln-92. Residues 126 to 163 (GRRICEKCGTTYHLVFNPPKVDGICDIDGGKLYQREDD) form an LID region. Position 127 (Arg-127) interacts with ATP. Residues Cys-130 and Cys-133 each coordinate Zn(2+). Position 136 to 137 (136 to 137 (TY)) interacts with ATP. Residues Cys-150 and Asp-153 each coordinate Zn(2+). 2 residues coordinate AMP: Arg-160 and Arg-171. Lys-199 is an ATP binding site.

It belongs to the adenylate kinase family. Monomer.

The protein resides in the cytoplasm. It carries out the reaction AMP + ATP = 2 ADP. Its pathway is purine metabolism; AMP biosynthesis via salvage pathway; AMP from ADP: step 1/1. Its function is as follows. Catalyzes the reversible transfer of the terminal phosphate group between ATP and AMP. Plays an important role in cellular energy homeostasis and in adenine nucleotide metabolism. This is Adenylate kinase from Staphylococcus epidermidis (strain ATCC 35984 / DSM 28319 / BCRC 17069 / CCUG 31568 / BM 3577 / RP62A).